The following is a 304-amino-acid chain: UDP-N-acetylenolpyruvoylglucosamine reductase (304 aa).

The FAD-binding PCMH-type domain maps to 31–196 (KVGGPADYLA…ISAKFNLKPG (166 aa)). R175 is a catalytic residue. Catalysis depends on S225, which acts as the Proton donor. The active site involves E295.

This sequence belongs to the MurB family. The cofactor is FAD.

Its subcellular location is the cytoplasm. The catalysed reaction is UDP-N-acetyl-alpha-D-muramate + NADP(+) = UDP-N-acetyl-3-O-(1-carboxyvinyl)-alpha-D-glucosamine + NADPH + H(+). Its pathway is cell wall biogenesis; peptidoglycan biosynthesis. Its function is as follows. Cell wall formation. This chain is UDP-N-acetylenolpyruvoylglucosamine reductase, found in Streptococcus thermophilus (strain CNRZ 1066).